The primary structure comprises 456 residues: Adenylosuccinate lyase (456 aa).

N(6)-(1,2-dicarboxyethyl)-AMP contacts are provided by residues 15–16, 90–92, and 122–123; these read RY, NHD, and TS. The active-site Proton donor/acceptor is H171. N(6)-(1,2-dicarboxyethyl)-AMP is bound at residue Q247. S295 acts as the Proton donor/acceptor in catalysis. Residues S296, 301 to 303, N309, R335, and 340 to 344 contribute to the N(6)-(1,2-dicarboxyethyl)-AMP site; these read KIN and STVLR.

The protein belongs to the lyase 1 family. Adenylosuccinate lyase subfamily. In terms of assembly, homotetramer. Residues from neighboring subunits contribute catalytic and substrate-binding residues to each active site.

It carries out the reaction N(6)-(1,2-dicarboxyethyl)-AMP = fumarate + AMP. It catalyses the reaction (2S)-2-[5-amino-1-(5-phospho-beta-D-ribosyl)imidazole-4-carboxamido]succinate = 5-amino-1-(5-phospho-beta-D-ribosyl)imidazole-4-carboxamide + fumarate. It functions in the pathway purine metabolism; AMP biosynthesis via de novo pathway; AMP from IMP: step 2/2. Its pathway is purine metabolism; IMP biosynthesis via de novo pathway; 5-amino-1-(5-phospho-D-ribosyl)imidazole-4-carboxamide from 5-amino-1-(5-phospho-D-ribosyl)imidazole-4-carboxylate: step 2/2. In terms of biological role, catalyzes two reactions in de novo purine nucleotide biosynthesis. Catalyzes the breakdown of 5-aminoimidazole- (N-succinylocarboxamide) ribotide (SAICAR or 2-[5-amino-1-(5-phospho-beta-D-ribosyl)imidazole-4-carboxamido]succinate) to 5-aminoimidazole-4-carboxamide ribotide (AICAR or 5-amino-1-(5-phospho-beta-D-ribosyl)imidazole-4-carboxamide) and fumarate, and of adenylosuccinate (ADS or N(6)-(1,2-dicarboxyethyl)-AMP) to adenosine monophosphate (AMP) and fumarate. In Buchnera aphidicola subsp. Schizaphis graminum (strain Sg), this protein is Adenylosuccinate lyase (purB).